Here is a 451-residue protein sequence, read N- to C-terminus: Alpha-galactosidase (451 aa).

An NAD(+)-binding site is contributed by 5–71; that stretch reads PKITFIGAGS…ASGKITCHTQ (67 aa). N151 is a binding site for substrate. Residue C173 coordinates Mn(2+). The active-site Proton donor is H174. H203 is a Mn(2+) binding site. R287 provides a ligand contact to substrate.

This sequence belongs to the glycosyl hydrolase 4 family. Homodimer. It depends on NAD(+) as a cofactor. Requires Mn(2+) as cofactor.

It carries out the reaction Hydrolysis of terminal, non-reducing alpha-D-galactose residues in alpha-D-galactosides, including galactose oligosaccharides, galactomannans and galactolipids.. The sequence is that of Alpha-galactosidase (melA) from Escherichia coli (strain K12).